The primary structure comprises 306 residues: tRNA pseudouridine synthase B (306 aa).

Asp39 serves as the catalytic Nucleophile.

The protein belongs to the pseudouridine synthase TruB family. Type 1 subfamily.

It catalyses the reaction uridine(55) in tRNA = pseudouridine(55) in tRNA. Functionally, responsible for synthesis of pseudouridine from uracil-55 in the psi GC loop of transfer RNAs. The sequence is that of tRNA pseudouridine synthase B from Arthrobacter sp. (strain FB24).